A 230-amino-acid chain; its full sequence is Fibrillarin-like rRNA/tRNA 2'-O-methyltransferase (230 aa).

S-adenosyl-L-methionine contacts are provided by residues 89-90, 107-108, 132-133, and 152-155; these read TT, EV, DA, and DISQ.

This sequence belongs to the methyltransferase superfamily. Fibrillarin family. In terms of assembly, interacts with nop5. Component of box C/D small ribonucleoprotein (sRNP) particles that contain rpl7ae, FlpA and nop5, plus a guide RNA.

Its function is as follows. Involved in pre-rRNA and tRNA processing. Utilizes the methyl donor S-adenosyl-L-methionine to catalyze the site-specific 2'-hydroxyl methylation of ribose moieties in rRNA and tRNA. Site specificity is provided by a guide RNA that base pairs with the substrate. Methylation occurs at a characteristic distance from the sequence involved in base pairing with the guide RNA. This chain is Fibrillarin-like rRNA/tRNA 2'-O-methyltransferase, found in Thermoplasma acidophilum (strain ATCC 25905 / DSM 1728 / JCM 9062 / NBRC 15155 / AMRC-C165).